Reading from the N-terminus, the 336-residue chain is Glyceraldehyde-3-phosphate dehydrogenase (336 aa).

NAD(+)-binding positions include 12–13 (RI), aspartate 35, arginine 79, and serine 121. D-glyceraldehyde 3-phosphate-binding positions include 152–154 (SCT) and threonine 183. Residue cysteine 153 is the Nucleophile of the active site. An NAD(+)-binding site is contributed by asparagine 184. D-glyceraldehyde 3-phosphate-binding positions include arginine 198, 211–212 (TG), and arginine 234. Asparagine 317 lines the NAD(+) pocket.

This sequence belongs to the glyceraldehyde-3-phosphate dehydrogenase family. As to quaternary structure, homotetramer.

The protein resides in the cytoplasm. The enzyme catalyses D-glyceraldehyde 3-phosphate + phosphate + NAD(+) = (2R)-3-phospho-glyceroyl phosphate + NADH + H(+). It functions in the pathway carbohydrate degradation; glycolysis; pyruvate from D-glyceraldehyde 3-phosphate: step 1/5. With respect to regulation, resistant to pentalenolactone. Catalyzes the oxidative phosphorylation of glyceraldehyde 3-phosphate (G3P) to 1,3-bisphosphoglycerate (BPG) using the cofactor NAD. The first reaction step involves the formation of a hemiacetal intermediate between G3P and a cysteine residue, and this hemiacetal intermediate is then oxidized to a thioester, with concomitant reduction of NAD to NADH. The reduced NADH is then exchanged with the second NAD, and the thioester is attacked by a nucleophilic inorganic phosphate to produce BPG. This is Glyceraldehyde-3-phosphate dehydrogenase (gap) from Streptomyces coelicolor (strain ATCC BAA-471 / A3(2) / M145).